Consider the following 450-residue polypeptide: Methionine aminopeptidase 2-2 (450 aa).

Basic and acidic residues-rich tracts occupy residues 1 to 10 and 30 to 39; these read MGAKISEDHP and RGAHLSRDGD. The segment at 1 to 100 is disordered; that stretch reads MGAKISEDHP…PPRVPLSELF (100 aa). Residues 47–56 are compositionally biased toward acidic residues; the sequence is GDDDDDDDEG. Residues 69 to 86 are compositionally biased toward basic residues; that stretch reads KKKKKKRKPKKKKAKKAT. His211 is a binding site for substrate. The a divalent metal cation site is built by Asp232, Asp243, and His302. His310 is a substrate binding site. The a divalent metal cation site is built by Glu335 and Glu431.

It belongs to the peptidase M24A family. Methionine aminopeptidase eukaryotic type 2 subfamily. Co(2+) is required as a cofactor. Requires Zn(2+) as cofactor. It depends on Mn(2+) as a cofactor. The cofactor is Fe(2+).

Its subcellular location is the cytoplasm. It catalyses the reaction Release of N-terminal amino acids, preferentially methionine, from peptides and arylamides.. Functionally, cotranslationally removes the N-terminal methionine from nascent proteins. The N-terminal methionine is often cleaved when the second residue in the primary sequence is small and uncharged (Met-Ala-, Cys, Gly, Pro, Ser, Thr, or Val). This Fusarium vanettenii (strain ATCC MYA-4622 / CBS 123669 / FGSC 9596 / NRRL 45880 / 77-13-4) (Fusarium solani subsp. pisi) protein is Methionine aminopeptidase 2-2.